The sequence spans 266 residues: uncharacterized protein (266 aa).

Phosphoserine is present on Ser176. The residue at position 178 (Thr178) is a Phosphothreonine.

This is an uncharacterized protein from Schizosaccharomyces pombe (strain 972 / ATCC 24843) (Fission yeast).